The primary structure comprises 259 residues: Flagellar L-ring protein 1 (259 aa).

An N-terminal signal peptide occupies residues 1–15 (MKRICLLALITTMSG). A lipid anchor (N-palmitoyl cysteine) is attached at C16. C16 carries S-diacylglycerol cysteine lipidation. The interval 38-63 (EGDKSKDESSGIVDTLRGRNDPVAGD) is disordered.

This sequence belongs to the FlgH family. In terms of assembly, the basal body constitutes a major portion of the flagellar organelle and consists of four rings (L,P,S, and M) mounted on a central rod.

Its subcellular location is the cell outer membrane. It is found in the bacterial flagellum basal body. Its function is as follows. Assembles around the rod to form the L-ring and probably protects the motor/basal body from shearing forces during rotation. The sequence is that of Flagellar L-ring protein 1 (flgH1) from Vibrio parahaemolyticus serotype O3:K6 (strain RIMD 2210633).